Consider the following 200-residue polypeptide: Ubiquitin-conjugating enzyme E2 K (200 aa).

At alanine 2 the chain carries N-acetylalanine. Residues isoleucine 4 to glycine 154 enclose the UBC core domain. Lysine 14 carries the post-translational modification N6-acetyllysine; alternate. Lysine 14 is covalently cross-linked (Glycyl lysine isopeptide (Lys-Gly) (interchain with G-Cter in SUMO); alternate). Lysine 14 participates in a covalent cross-link: Glycyl lysine isopeptide (Lys-Gly) (interchain with G-Cter in SUMO1); alternate. The active-site Glycyl thioester intermediate is the cysteine 92. Serine 159 is modified (phosphoserine). The UBA domain occupies proline 160–asparagine 200.

It belongs to the ubiquitin-conjugating enzyme family. Interacts with RNF138/NARF. Interacts with BRCA1. Sumoylation at Lys-14 impairs catalytic activity.

It is found in the cytoplasm. The enzyme catalyses S-ubiquitinyl-[E1 ubiquitin-activating enzyme]-L-cysteine + [E2 ubiquitin-conjugating enzyme]-L-cysteine = [E1 ubiquitin-activating enzyme]-L-cysteine + S-ubiquitinyl-[E2 ubiquitin-conjugating enzyme]-L-cysteine.. The protein operates within protein modification; protein ubiquitination. In terms of biological role, accepts ubiquitin from the E1 complex and catalyzes its covalent attachment to other proteins. In vitro, in the presence or in the absence of BRCA1-BARD1 E3 ubiquitin-protein ligase complex, catalyzes the synthesis of 'Lys-48'-linked polyubiquitin chains. Does not transfer ubiquitin directly to but elongates monoubiquitinated substrate protein. Mediates the selective degradation of short-lived and abnormal proteins, such as the endoplasmic reticulum-associated degradation (ERAD) of misfolded lumenal proteins. Ubiquitinates huntingtin. May mediate foam cell formation by the suppression of apoptosis of lipid-bearing macrophages through ubiquitination and subsequence degradation of p53/TP53. Proposed to be involved in ubiquitination and proteolytic processing of NF-kappa-B; in vitro supports ubiquitination of NFKB1. The chain is Ubiquitin-conjugating enzyme E2 K (UBE2K) from Bos taurus (Bovine).